The sequence spans 152 residues: Protein-export protein SecB (152 aa).

Belongs to the SecB family. Homotetramer, a dimer of dimers. One homotetramer interacts with 1 SecA dimer.

Its subcellular location is the cytoplasm. Functionally, one of the proteins required for the normal export of preproteins out of the cell cytoplasm. It is a molecular chaperone that binds to a subset of precursor proteins, maintaining them in a translocation-competent state. It also specifically binds to its receptor SecA. This is Protein-export protein SecB from Dechloromonas aromatica (strain RCB).